The chain runs to 104 residues: uncharacterized protein (104 aa).

Disordered stretches follow at residues 1–48 (MLRR…NNQP) and 66–104 (QENT…RRCS).

This is an uncharacterized protein from Saccharomyces cerevisiae (strain ATCC 204508 / S288c) (Baker's yeast).